A 1010-amino-acid chain; its full sequence is Sodium/potassium-transporting ATPase subunit alpha-3 (1010 aa).

The disordered stretch occupies residues 1–21 (MGDKGEKESPKKGKGKRDLDD). Over 1-74 (MGDKGEKESP…NALTPPPTTP (74 aa)) the chain is Cytoplasmic. The interval 69-71 (PPP) is interaction with phosphoinositide-3 kinase. A helical membrane pass occupies residues 75–95 (EWVKFCRQLFGGFSILLWIGA). Over 96-118 (ILCFLAYGIQAGTEDEPSNDNLY) the chain is Extracellular. Residues 119–139 (LGIVLAAVVIITGCFSYYQEA) traverse the membrane as a helical segment. Residues 140-275 (KSSKIMESFK…VGKTPIAVEI (136 aa)) are Cytoplasmic-facing. A helical membrane pass occupies residues 276–295 (EHFIQLITGVAVFLGISFFV). Residues 296–307 (LSLILGYTWLEA) are Extracellular-facing. The helical transmembrane segment at 308–325 (VIFLIGIIVANVPEGLLA) threads the bilayer. The Cytoplasmic portion of the chain corresponds to 326–759 (TVTVCLTLTA…EEGRLIFDNL (434 aa)). Residue aspartate 363 is the 4-aspartylphosphate intermediate of the active site. Residues aspartate 704 and aspartate 708 each contribute to the Mg(2+) site. Residues 760-779 (KKSIAYTLTSNIPEITPFLL) traverse the membrane as a helical segment. Residues 780–789 (FIMANIPLPL) lie on the Extracellular side of the membrane. Residues 790-810 (GTITILCIDLGTDMVPAISLA) form a helical membrane-spanning segment. Residues 811–830 (YEAAESDIMKRQPRNPRSDK) are Cytoplasmic-facing. A helical transmembrane segment spans residues 831 to 853 (LVNERLISMAYGQIGMIQALGGF). At 854-905 (FSYFVILAENGFLPSCLVGIRLSWDDRTINDLEDSYGQQWTYEQRKVVEFTC) the chain is on the extracellular side. Residues 906–925 (HTAFFVSIVVVQWADLIICK) form a helical membrane-spanning segment. Residues 926-938 (TRRNSVFQQGMKN) lie on the Cytoplasmic side of the membrane. Serine 930 bears the Phosphoserine; by PKA mark. Residues 939-957 (KILIFGLFEETALAAFLSY) traverse the membrane as a helical segment. Residues 958 to 972 (CPGMDVALRMYPLKP) are Extracellular-facing. Residues 973–993 (SWWFCAFPYSFLIFVYDEIRK) traverse the membrane as a helical segment. Residues 994-1010 (LILRRNPGGWVEKETYY) are Cytoplasmic-facing.

It belongs to the cation transport ATPase (P-type) (TC 3.A.3) family. Type IIC subfamily. As to quaternary structure, the sodium/potassium-transporting ATPase is composed of a catalytic alpha subunit, an auxiliary non-catalytic beta subunit and an additional regulatory subunit.

It localises to the cell membrane. It carries out the reaction K(+)(out) + Na(+)(in) + ATP + H2O = K(+)(in) + Na(+)(out) + ADP + phosphate + H(+). Functionally, this is the catalytic component of the active enzyme, which catalyzes the hydrolysis of ATP coupled with the exchange of sodium and potassium ions across the plasma membrane. This action creates the electrochemical gradient of sodium and potassium ions, providing the energy for active transport of various nutrients. This chain is Sodium/potassium-transporting ATPase subunit alpha-3 (ATP1A3), found in Gallus gallus (Chicken).